A 419-amino-acid chain; its full sequence is CinA-like protein (419 aa).

Belongs to the CinA family.

This Acaryochloris marina (strain MBIC 11017) protein is CinA-like protein.